The primary structure comprises 453 residues: Bifunctional protein GlmU (453 aa).

The tract at residues 1–225 (MNIVILAAGT…EWETLGVNSK (225 aa)) is pyrophosphorylase. UDP-N-acetyl-alpha-D-glucosamine-binding positions include 6–9 (LAAG), lysine 20, glutamine 71, 76–77 (GT), 98–100 (YGD), glycine 135, glutamate 150, asparagine 165, and asparagine 223. Residue aspartate 100 coordinates Mg(2+). Asparagine 223 provides a ligand contact to Mg(2+). The segment at 226-246 (AQLAELERIHQRNVADALLVD) is linker. The interval 247 to 453 (GVTLADPARV…GYVRPVKKKS (207 aa)) is N-acetyltransferase. UDP-N-acetyl-alpha-D-glucosamine contacts are provided by arginine 329 and lysine 347. Histidine 359 acts as the Proton acceptor in catalysis. Residues tyrosine 362 and asparagine 373 each contribute to the UDP-N-acetyl-alpha-D-glucosamine site. Residues alanine 376, 382–383 (NY), serine 401, and alanine 419 contribute to the acetyl-CoA site.

This sequence in the N-terminal section; belongs to the N-acetylglucosamine-1-phosphate uridyltransferase family. The protein in the C-terminal section; belongs to the transferase hexapeptide repeat family. In terms of assembly, homotrimer. Requires Mg(2+) as cofactor.

Its subcellular location is the cytoplasm. The catalysed reaction is alpha-D-glucosamine 1-phosphate + acetyl-CoA = N-acetyl-alpha-D-glucosamine 1-phosphate + CoA + H(+). It catalyses the reaction N-acetyl-alpha-D-glucosamine 1-phosphate + UTP + H(+) = UDP-N-acetyl-alpha-D-glucosamine + diphosphate. The protein operates within nucleotide-sugar biosynthesis; UDP-N-acetyl-alpha-D-glucosamine biosynthesis; N-acetyl-alpha-D-glucosamine 1-phosphate from alpha-D-glucosamine 6-phosphate (route II): step 2/2. It functions in the pathway nucleotide-sugar biosynthesis; UDP-N-acetyl-alpha-D-glucosamine biosynthesis; UDP-N-acetyl-alpha-D-glucosamine from N-acetyl-alpha-D-glucosamine 1-phosphate: step 1/1. It participates in bacterial outer membrane biogenesis; LPS lipid A biosynthesis. Functionally, catalyzes the last two sequential reactions in the de novo biosynthetic pathway for UDP-N-acetylglucosamine (UDP-GlcNAc). The C-terminal domain catalyzes the transfer of acetyl group from acetyl coenzyme A to glucosamine-1-phosphate (GlcN-1-P) to produce N-acetylglucosamine-1-phosphate (GlcNAc-1-P), which is converted into UDP-GlcNAc by the transfer of uridine 5-monophosphate (from uridine 5-triphosphate), a reaction catalyzed by the N-terminal domain. The sequence is that of Bifunctional protein GlmU from Burkholderia orbicola (strain AU 1054).